The chain runs to 308 residues: Palmitoyltransferase ZDHHC7 (308 aa).

Residues 1-50 (MQPSGHRLRDIEHHPLLTDNDNYDSASSSSSETDMADRVWFIRDGCGMVC) are Cytoplasmic-facing. A helical transmembrane segment spans residues 51 to 71 (AVMTWLLVVYADFVVTFVMLL). Residues 72–75 (PSKD) are Lumenal-facing. Residues 76–96 (FWYSVVNGVLFNCLAVLALSS) traverse the membrane as a helical segment. Residues 97–173 (HLRTMLTDPG…NNCVGEKNQR (77 aa)) lie on the Cytoplasmic side of the membrane. In terms of domain architecture, DHHC spans 130 to 180 (YKCPKCCCIKPERAHHCSICKRCIRKMDHHCPWVNNCVGEKNQRFFVLFTM). Catalysis depends on Cys-160, which acts as the S-palmitoyl cysteine intermediate. Residues 174–194 (FFVLFTMYIALSSVHALILCG) form a helical membrane-spanning segment. The Lumenal segment spans residues 195-217 (LQFISCVRGQWTECSDFSPPITV). A helical transmembrane segment spans residues 218–238 (ILLVFLCLEGLLFFTFTAVMF). Topologically, residues 239–308 (GTQIHSICND…TRKGGPEFSV (70 aa)) are cytoplasmic.

It belongs to the DHHC palmitoyltransferase family. Homooligomers. Heterooligomers with ZDHHC3. Post-translationally, autopalmitoylated. Ubiquitously expressed, with highest levels in liver, kidney and brain. Expressed in all brain regions.

Its subcellular location is the golgi apparatus membrane. It carries out the reaction L-cysteinyl-[protein] + hexadecanoyl-CoA = S-hexadecanoyl-L-cysteinyl-[protein] + CoA. It catalyses the reaction L-cysteinyl-[protein] + tetradecanoyl-CoA = S-tetradecanoyl-L-cysteinyl-[protein] + CoA. The catalysed reaction is L-cysteinyl-[protein] + octadecanoyl-CoA = S-octadecanoyl-L-cysteinyl-[protein] + CoA. Functionally, golgi-localized palmitoyltransferase that catalyzes the addition of palmitate onto various protein substrates and therefore functions in several unrelated biological processes. Has no stringent fatty acid selectivity and in addition to palmitate can also transfer onto target proteins myristate from tetradecanoyl-CoA and stearate from octadecanoyl-CoA. Palmitoylates sex steroid hormone receptors, including ESR1, PGR and AR, thereby regulating their targeting to the plasma membrane and their function in rapid intracellular signaling upon binding of sex hormones. Palmitoylates GNAQ, a heterotrimeric G protein, regulating its dynamic localization at the plasma membrane and is thereby involved in GNAQ-dependent G protein-coupled receptor signaling pathways. Also functions in ligand-induced cell death by regulating the FAS signaling pathway through the palmitoylation and stabilization of the receptor at the plasma membrane. In epithelial cells, palmitoylates SCRIB and regulates its localization to the plasma membrane, regulating indirectly cell polarity and differentiation. Also palmitoylates JAM3 and promotes its expression at tight junctions and regulates its function in cell migration. Palmitoylates the glucose transporter GLUT4/SLC2A4 and controls the insulin-dependent translocation of GLUT4 to the plasma membrane. In brain, could also palmitoylate SNAP25 and DLG4/PSD95. Could also palmitoylate DNAJC5 and regulate its localization to the Golgi membrane. Could also palmitoylate NCDN. May play a role in follicle stimulation hormone (FSH) activation of testicular Sertoli cells. Activates pyroptosis by catalyzing palmitoylation of gasdermin-D (GSDMD). The polypeptide is Palmitoyltransferase ZDHHC7 (Mus musculus (Mouse)).